Reading from the N-terminus, the 205-residue chain is Rho GDP-dissociation inhibitor (205 aa).

Positions 1-11 (MSVNNEVSADQ) are enriched in polar residues. The interval 1–31 (MSVNNEVSADQHNPELEDDTFEHGPPVSLGE) is disordered. Ser-63 is modified (phosphoserine).

Belongs to the Rho GDI family.

The protein resides in the cytoplasm. It localises to the nucleus. Regulates the GDP/GTP exchange reaction of the Rho proteins by inhibiting the dissociation of GDP from them, and the subsequent binding of GTP to them. The protein is Rho GDP-dissociation inhibitor of Schizosaccharomyces pombe (strain 972 / ATCC 24843) (Fission yeast).